We begin with the raw amino-acid sequence, 168 residues long: ATP synthase subunit b (168 aa).

A helical transmembrane segment spans residues L9 to L29.

Belongs to the ATPase B chain family. In terms of assembly, F-type ATPases have 2 components, F(1) - the catalytic core - and F(0) - the membrane proton channel. F(1) has five subunits: alpha(3), beta(3), gamma(1), delta(1), epsilon(1). F(0) has three main subunits: a(1), b(2) and c(10-14). The alpha and beta chains form an alternating ring which encloses part of the gamma chain. F(1) is attached to F(0) by a central stalk formed by the gamma and epsilon chains, while a peripheral stalk is formed by the delta and b chains.

The protein resides in the cell membrane. In terms of biological role, f(1)F(0) ATP synthase produces ATP from ADP in the presence of a proton or sodium gradient. F-type ATPases consist of two structural domains, F(1) containing the extramembraneous catalytic core and F(0) containing the membrane proton channel, linked together by a central stalk and a peripheral stalk. During catalysis, ATP synthesis in the catalytic domain of F(1) is coupled via a rotary mechanism of the central stalk subunits to proton translocation. Functionally, component of the F(0) channel, it forms part of the peripheral stalk, linking F(1) to F(0). The polypeptide is ATP synthase subunit b (Caldanaerobacter subterraneus subsp. tengcongensis (strain DSM 15242 / JCM 11007 / NBRC 100824 / MB4) (Thermoanaerobacter tengcongensis)).